The following is a 228-amino-acid chain: MMQPVLELLGIDRTYHTAAGALQVLQGTDLRVSPGELVGLVGPSGSGKSTLLHTAGLLERPEGGSIFLDGIDCLKLNDNGRTSIRRRKIGFVYQFHHLLPEFNAIDNIAMPLMIAGVKKSKAREKASSLLEVMGLEERAYHQPGQLSGGEQQRVAIARALANDPKLVIADEPTGNLDPTTTERVFGTLIKMVREEGAGVLVATHNFALTRHMDRILTLKDGKLIDYVE.

Residues 6–227 (LELLGIDRTY…LKDGKLIDYV (222 aa)) form the ABC transporter domain. 42–49 (GPSGSGKS) is a binding site for ATP.

Belongs to the ABC transporter superfamily. Lipoprotein translocase (TC 3.A.1.125) family. In terms of assembly, the complex is composed of two ATP-binding proteins (LolD) and two transmembrane proteins (LolC and LolE).

It localises to the cell inner membrane. In terms of biological role, part of the ABC transporter complex LolCDE involved in the translocation of mature outer membrane-directed lipoproteins, from the inner membrane to the periplasmic chaperone, LolA. Responsible for the formation of the LolA-lipoprotein complex in an ATP-dependent manner. The sequence is that of Lipoprotein-releasing system ATP-binding protein LolD from Hyphomonas neptunium (strain ATCC 15444).